Consider the following 72-residue polypeptide: DNA-directed RNA polymerase subunit omega (72 aa).

It belongs to the RNA polymerase subunit omega family. In terms of assembly, the RNAP catalytic core consists of 2 alpha, 1 beta, 1 beta' and 1 omega subunit. When a sigma factor is associated with the core the holoenzyme is formed, which can initiate transcription.

The catalysed reaction is RNA(n) + a ribonucleoside 5'-triphosphate = RNA(n+1) + diphosphate. Promotes RNA polymerase assembly. Latches the N- and C-terminal regions of the beta' subunit thereby facilitating its interaction with the beta and alpha subunits. The polypeptide is DNA-directed RNA polymerase subunit omega (Lactobacillus johnsonii (strain CNCM I-12250 / La1 / NCC 533)).